A 473-amino-acid chain; its full sequence is Levansucrase (473 aa).

Positions 1 to 29 (MNIKKFAKQATVLTFTTALLAGGATQAFA) are cleaved as a signal peptide. 3 residues coordinate sucrose: Trp85, Asp86, and Ser164. The Nucleophile role is filled by Asp86. Asp241 contacts Ca(2+). Arg246 and Asp247 together coordinate sucrose. Ca(2+)-binding residues include Gln272, Leu308, Asn310, and Asp339. Position 340 (Glu340) interacts with sucrose. Residue Glu342 is the Proton donor/acceptor of the active site. Arg360 lines the sucrose pocket.

Belongs to the glycosyl hydrolase 68 family. As to quaternary structure, monomer.

Its subcellular location is the secreted. The catalysed reaction is [6)-beta-D-fructofuranosyl-(2-&gt;](n) alpha-D-glucopyranoside + sucrose = [6)-beta-D-fructofuranosyl-(2-&gt;](n+1) alpha-D-glucopyranoside + D-glucose. Its activity is regulated as follows. Ca(2+) may play an important structural role and promote stability of levansucrase. The enzyme concentration is a factor defining the molecular weight (MW) levan distribution. A bimodal distribution is reported at the usual enzyme concentrations. At low concentrations, the enzyme synthesizes high MW levan, and at high concentrations, it synthesizes low MW levan. Its function is as follows. Catalyzes the synthesis of levan, a fructose polymer, by transferring the fructosyl moiety from sucrose to a growing acceptor molecule. Also displays sucrose hydrolase activity. At low sucrose concentrations, functions as an hydrolase with water as acceptor, whereas at higher substrate concentrations it adds fructosyl units to a growing levan chain. This chain is Levansucrase, found in Bacillus subtilis (strain 168).